The following is a 457-amino-acid chain: Glycoprotein endo-alpha-1,2-mannosidase-like protein (457 aa).

The Cytoplasmic portion of the chain corresponds to 1–8 (MARRRRRA). A helical; Signal-anchor for type II membrane protein membrane pass occupies residues 9-29 (CIALFLVLLFAFGTLMGLRTL). Over 30–457 (KAPDGLPALG…FIKEKEQWLM (428 aa)) the chain is Lumenal. The disordered stretch occupies residues 46–93 (PFERRPEGAPAPAARAPAAPAAPPPPPPPPRTADPGGSPGPAPAEAEP). The span at 53–64 (GAPAPAARAPAA) shows a compositional bias: low complexity. The segment covering 65–87 (PAAPPPPPPPPRTADPGGSPGPA) has biased composition (pro residues).

The protein belongs to the glycosyl hydrolase 99 family.

The protein localises to the golgi apparatus membrane. The chain is Glycoprotein endo-alpha-1,2-mannosidase-like protein (MANEAL) from Homo sapiens (Human).